The sequence spans 427 residues: Serine hydroxymethyltransferase (427 aa).

Residues Leu-124 and 128 to 130 (GHL) contribute to the (6S)-5,6,7,8-tetrahydrofolate site. N6-(pyridoxal phosphate)lysine is present on Lys-233.

The protein belongs to the SHMT family. As to quaternary structure, homodimer. Pyridoxal 5'-phosphate is required as a cofactor.

It is found in the cytoplasm. It catalyses the reaction (6R)-5,10-methylene-5,6,7,8-tetrahydrofolate + glycine + H2O = (6S)-5,6,7,8-tetrahydrofolate + L-serine. It functions in the pathway one-carbon metabolism; tetrahydrofolate interconversion. The protein operates within amino-acid biosynthesis; glycine biosynthesis; glycine from L-serine: step 1/1. Its function is as follows. Catalyzes the reversible interconversion of serine and glycine with tetrahydrofolate (THF) serving as the one-carbon carrier. This reaction serves as the major source of one-carbon groups required for the biosynthesis of purines, thymidylate, methionine, and other important biomolecules. Also exhibits THF-independent aldolase activity toward beta-hydroxyamino acids, producing glycine and aldehydes, via a retro-aldol mechanism. The protein is Serine hydroxymethyltransferase of Paracoccus denitrificans (strain Pd 1222).